The chain runs to 355 residues: Phosphoserine aminotransferase (355 aa).

Arg-41 is an L-glutamate binding site. Residues 75 to 76 (AS), Trp-99, Thr-147, Asp-166, and Gln-189 each bind pyridoxal 5'-phosphate. Position 190 is an N6-(pyridoxal phosphate)lysine (Lys-190). 231–232 (NT) serves as a coordination point for pyridoxal 5'-phosphate.

This sequence belongs to the class-V pyridoxal-phosphate-dependent aminotransferase family. SerC subfamily. Homodimer. It depends on pyridoxal 5'-phosphate as a cofactor.

It localises to the cytoplasm. The catalysed reaction is O-phospho-L-serine + 2-oxoglutarate = 3-phosphooxypyruvate + L-glutamate. It carries out the reaction 4-(phosphooxy)-L-threonine + 2-oxoglutarate = (R)-3-hydroxy-2-oxo-4-phosphooxybutanoate + L-glutamate. Its pathway is amino-acid biosynthesis; L-serine biosynthesis; L-serine from 3-phospho-D-glycerate: step 2/3. The protein operates within cofactor biosynthesis; pyridoxine 5'-phosphate biosynthesis; pyridoxine 5'-phosphate from D-erythrose 4-phosphate: step 3/5. Functionally, catalyzes the reversible conversion of 3-phosphohydroxypyruvate to phosphoserine and of 3-hydroxy-2-oxo-4-phosphonooxybutanoate to phosphohydroxythreonine. This is Phosphoserine aminotransferase from Parabacteroides distasonis (strain ATCC 8503 / DSM 20701 / CIP 104284 / JCM 5825 / NCTC 11152).